Here is a 176-residue protein sequence, read N- to C-terminus: Ribosome rescue factor SmrB (176 aa).

The interval 29–51 is disordered; that stretch reads TIIQQPKKNTKQKEIKRSNREAS. Positions 39-51 are enriched in basic and acidic residues; the sequence is KQKEIKRSNREAS. Positions 97 to 172 constitute a Smr domain; it reads LDMHGMTQQE…GDGALLVLLS (76 aa).

Belongs to the SmrB family. As to quaternary structure, associates with collided ribosomes, but not with correctly translating polysomes.

Functionally, acts as a ribosome collision sensor. Detects stalled/collided disomes (pairs of ribosomes where the leading ribosome is stalled and a second ribosome has collided with it) and endonucleolytically cleaves mRNA at the 5' boundary of the stalled ribosome. Stalled/collided disomes form a new interface (primarily via the 30S subunits) that binds SmrB. Cleaved mRNA becomes available for tmRNA ligation, leading to ribosomal subunit dissociation and rescue of stalled ribosomes. The sequence is that of Ribosome rescue factor SmrB from Vibrio parahaemolyticus serotype O3:K6 (strain RIMD 2210633).